The sequence spans 227 residues: uncharacterized protein (227 aa).

The protein to ORF5 in pFZ1.

This is an uncharacterized protein from Methanothermobacter thermautotrophicus (Methanobacterium thermoformicicum).